An 87-amino-acid chain; its full sequence is Omega-lycotoxin-Am1d (87 aa).

A signal peptide spans 1–17 (MKLSIFFVLFFIAIAYC). Residues 18-40 (QPEFLDDEEDEVEETLPVAEEGR) constitute a propeptide that is removed on maturation. Intrachain disulfides connect cysteine 44/cysteine 59, cysteine 51/cysteine 64, cysteine 58/cysteine 84, and cysteine 66/cysteine 82.

It belongs to the neurotoxin omega-lctx family. As to expression, expressed by the venom gland.

Its subcellular location is the secreted. Its function is as follows. Modulates Cav2.1/CACNA1A voltage-gated calcium channels (P/Q-type currents) in rat cerebellar Purkinje cells and hippocampal CA1-CA3 neurons. At saturating concentrations (&gt;10 nM) decelerates activation kinetics and slightly increases peak amplitude without affecting deactivation kinetics. In vivo, does not cause death when intravenously injected into mice. In rat models, through its activity on Cav2.1/CACNA1A, has an ameliorative effect on memory defects provoked by hyperstimulation of N-methyl-D-aspartate receptors (NMDARs) in the hippocampus. This chain is Omega-lycotoxin-Am1d, found in Alopecosa marikovskyi (Wolf spider).